A 249-amino-acid polypeptide reads, in one-letter code: MKICLLDETGAGDGALSVLAARWGLEHDENNLMALVLTPQHLELRKRDEPKLGGIFVDFLGGAMAHRRKFGGGRGEAVAKAVGIKGDYLPDVVDATAGLGRDAFVLASVGCRVRMLERNPVVAALLDDGLARGYADADIGPWLRQRLQLIHASSLTALTDITPRPQVVYLDPMFPHRQKSALVKKEMRVFQSLVGPDLDADGLLEPARQLATKRVVVKRPDYAPPLADIATPNAIVTKGHRFDIYAGTA.

S-adenosyl-L-methionine-binding positions include 101–102, 117–118, 153–154, and Asp171; these read RD, ER, and SS.

It belongs to the methyltransferase superfamily. RsmJ family.

The protein localises to the cytoplasm. It catalyses the reaction guanosine(1516) in 16S rRNA + S-adenosyl-L-methionine = N(2)-methylguanosine(1516) in 16S rRNA + S-adenosyl-L-homocysteine + H(+). Specifically methylates the guanosine in position 1516 of 16S rRNA. This Salmonella arizonae (strain ATCC BAA-731 / CDC346-86 / RSK2980) protein is Ribosomal RNA small subunit methyltransferase J.